The following is a 290-amino-acid chain: S-methyl-5'-thioadenosine phosphorylase 2 (290 aa).

Phosphate contacts are provided by residues Ser14, Arg57–His58, and Ser90–Ala91. Met185 is a binding site for substrate. Ser186 lines the phosphate pocket. Position 209–211 (Asp209–Asp211) interacts with substrate.

Belongs to the PNP/MTAP phosphorylase family. MTAP subfamily. Homotrimer.

It localises to the cytoplasm. The protein localises to the nucleus. The enzyme catalyses S-methyl-5'-thioadenosine + phosphate = 5-(methylsulfanyl)-alpha-D-ribose 1-phosphate + adenine. Its pathway is amino-acid biosynthesis; L-methionine biosynthesis via salvage pathway; S-methyl-5-thio-alpha-D-ribose 1-phosphate from S-methyl-5'-thioadenosine (phosphorylase route): step 1/1. In terms of biological role, catalyzes the reversible phosphorylation of S-methyl-5'-thioadenosine (MTA) to adenine and 5-methylthioribose-1-phosphate. Involved in the breakdown of MTA, a major by-product of polyamine biosynthesis. Responsible for the first step in the methionine salvage pathway after MTA has been generated from S-adenosylmethionine. Has broad substrate specificity with 6-aminopurine nucleosides as preferred substrates. In Puccinia graminis f. sp. tritici (strain CRL 75-36-700-3 / race SCCL) (Black stem rust fungus), this protein is S-methyl-5'-thioadenosine phosphorylase 2.